Here is a 316-residue protein sequence, read N- to C-terminus: Triplex capsid protein 2 (316 aa).

Belongs to the herpesviridae TRX2 protein family. Interacts with TRX1 and major capisd protein/MCP.

The protein resides in the virion. It localises to the host nucleus. Functionally, structural component of the T=16 icosahedral capsid. The capsid is composed of pentamers and hexamers of major capsid protein/MCP, which are linked together by heterotrimers called triplexes. These triplexes are formed by a single molecule of triplex protein 1/TRX1 and two copies of triplex protein 2/TRX2. Additionally, TRX1 is required for efficient transport of TRX2 to the nucleus, which is the site of capsid assembly. In Homo sapiens (Human), this protein is Triplex capsid protein 2.